The chain runs to 668 residues: DNA damage-responsive serine/threonine-protein kinase RqkA (668 aa).

One can recognise a Protein kinase domain in the interval 13-272; sequence YELLALLGEG…SGAALAHLWA (260 aa). ATP is bound by residues 19–27 and K42; that span reads LGEGGSAQV. D137 serves as the catalytic Proton acceptor.

This sequence belongs to the protein kinase superfamily. Ser/Thr protein kinase family. Pyrroloquinoline quinone is required as a cofactor. Autophosphorylated.

The enzyme catalyses L-seryl-[protein] + ATP = O-phospho-L-seryl-[protein] + ADP + H(+). It catalyses the reaction L-threonyl-[protein] + ATP = O-phospho-L-threonyl-[protein] + ADP + H(+). Its activity is regulated as follows. Autokinase activity is stimulated by DNA damage. Stimulated by PQQ and DNA ends in vitro. In terms of biological role, plays an important role in radiation resistance and DNA double-strand break (DSB) repair. Involved in transcriptional regulation of genes important for bacterial stress response. Phosphorylates PprA in vitro. The sequence is that of DNA damage-responsive serine/threonine-protein kinase RqkA (rqkA) from Deinococcus radiodurans (strain ATCC 13939 / DSM 20539 / JCM 16871 / CCUG 27074 / LMG 4051 / NBRC 15346 / NCIMB 9279 / VKM B-1422 / R1).